Consider the following 54-residue polypeptide: Conotoxin vc5a (54 aa).

The first 14 residues, 1–14 (VILLLITSTPSVDA), serve as a signal peptide directing secretion. The propeptide occupies 15-42 (RLKAKDNMPLASFHDNAKRTLQTRLINT). Residue proline 49 is modified to 4-hydroxyproline. The residue at position 53 (isoleucine 53) is an Isoleucine amide.

This sequence belongs to the conotoxin T superfamily. Contains 2 disulfide bonds that can be either 'C1-C3, C2-C4' or 'C1-C4, C2-C3', since these disulfide connectivities have been observed for conotoxins with cysteine framework V (for examples, see AC P0DQQ7 and AC P81755). Expressed by the venom duct.

It is found in the secreted. This chain is Conotoxin vc5a, found in Conus victoriae (Queen Victoria cone).